The following is a 447-amino-acid chain: Growth/differentiation factor 7 (447 aa).

The N-terminal stretch at 1-19 is a signal peptide; the sequence is MDLSAAAALCLWLLSACRP. Positions 20 to 318 are excised as a propeptide; sequence RDGLEAAAVL…AVTAGRRRRR (299 aa). N-linked (GlcNAc...) asparagine glycosylation is present at N80. Residues 292-346 are disordered; that stretch reads LAAQPPPDPGTGTGSPRAVTAGRRRRRTALAGTRTAQGSGGGAGRGHGRRGRSRC. The span at 337 to 346 shows a compositional bias: basic residues; sequence GHGRRGRSRC. Cystine bridges form between C346–C412, C375–C444, and C379–C446.

Belongs to the TGF-beta family. As to quaternary structure, homodimer; disulfide-linked. Highly expressed in the primary aera of brain neocortex.

It is found in the secreted. Functionally, may play an active role in the motor area of the primate neocortex. The protein is Growth/differentiation factor 7 (GDF7) of Chlorocebus aethiops (Green monkey).